We begin with the raw amino-acid sequence, 269 residues long: GTP cyclohydrolase FolE2 (269 aa).

The protein belongs to the GTP cyclohydrolase IV family.

It catalyses the reaction GTP + H2O = 7,8-dihydroneopterin 3'-triphosphate + formate + H(+). It functions in the pathway cofactor biosynthesis; 7,8-dihydroneopterin triphosphate biosynthesis; 7,8-dihydroneopterin triphosphate from GTP: step 1/1. In terms of biological role, converts GTP to 7,8-dihydroneopterin triphosphate. The sequence is that of GTP cyclohydrolase FolE2 from Burkholderia ambifaria (strain ATCC BAA-244 / DSM 16087 / CCUG 44356 / LMG 19182 / AMMD) (Burkholderia cepacia (strain AMMD)).